We begin with the raw amino-acid sequence, 328 residues long: uncharacterized protein (328 aa).

It to the C-terminal of para-aminobenzoate synthase component I.

This is an uncharacterized protein from Haemophilus influenzae (strain ATCC 51907 / DSM 11121 / KW20 / Rd).